A 294-amino-acid chain; its full sequence is Indole-3-glycerol phosphate synthase (294 aa).

The protein belongs to the TrpC family.

The enzyme catalyses 1-(2-carboxyphenylamino)-1-deoxy-D-ribulose 5-phosphate + H(+) = (1S,2R)-1-C-(indol-3-yl)glycerol 3-phosphate + CO2 + H2O. Its pathway is amino-acid biosynthesis; L-tryptophan biosynthesis; L-tryptophan from chorismate: step 4/5. In Synechococcus sp. (strain RCC307), this protein is Indole-3-glycerol phosphate synthase.